The primary structure comprises 122 residues: Large ribosomal subunit protein uL14 (122 aa).

The protein belongs to the universal ribosomal protein uL14 family. Part of the 50S ribosomal subunit. Forms a cluster with proteins L3 and L19. In the 70S ribosome, L14 and L19 interact and together make contacts with the 16S rRNA in bridges B5 and B8.

In terms of biological role, binds to 23S rRNA. Forms part of two intersubunit bridges in the 70S ribosome. This is Large ribosomal subunit protein uL14 from Bacillus velezensis (strain DSM 23117 / BGSC 10A6 / LMG 26770 / FZB42) (Bacillus amyloliquefaciens subsp. plantarum).